The following is a 123-amino-acid chain: Snaclec echicetin subunit beta (123 aa).

The 121-residue stretch at 1-121 (NCLPDWSVYE…SGEFYFVCKC (121 aa)) folds into the C-type lectin domain. 3 disulfide bridges follow: C2–C13, C30–C119, and C96–C111.

The protein belongs to the snaclec family. In terms of assembly, heterodimer of subunits alpha and beta; disulfide-linked. Forms an active complex with the pentameric immunoglobuline Mkappa (IgMkappa). Expressed by the venom gland.

The protein localises to the secreted. Echicetin itself inhibits aggregation of washed platelets induced by vWF, thrombin or alboaggregin-A. However, when complexed with the pentameric plasma immunoglobulin Mkappa (IgMkappa), echicetin binds specifically to GPIb and activates platelets. This is caused by P-selectin expression and activation of alpha-IIb/beta-3 as well as tyrosine phosphorylation of several signal transduction molecules, including p53/56(LYN), p64, p72(SYK), p70 to p90, and p120. In vivo, it induces thrombocytopenia when injected into mice, probably accounting of activation of platelets rather than inhibition. The protein is Snaclec echicetin subunit beta of Echis carinatus sochureki (Saw-scaled viper).